Here is a 206-residue protein sequence, read N- to C-terminus: Musculin (206 aa).

The interval 1 to 115 is disordered; that stretch reads MSTGSVSDPE…QSQRNAANAR (115 aa). Acidic residues predominate over residues 46–56; it reads SAEEEDPDGEE. Residues 71–76 carry the Nuclear localization signal motif; the sequence is KRKRPR. A compositionally biased stretch (gly residues) spans 78-92; that stretch reads AGGGGAGGSAGGGGK. Positions 93–102 are enriched in low complexity; it reads KPLPAKGSAA. Residues 107-159 enclose the bHLH domain; the sequence is SQRNAANARERARMRVLSKAFSRLKTSLPWVPPDTKLSKLDTLRLASSYIAHL.

As to quaternary structure, efficient DNA binding requires dimerization with another bHLH protein. Binds DNA as a homodimer or a heterodimer. Forms a heterodimer with TCF3. As to expression, expressed in lymphoid tissues, B-cell lines and activated B-cells.

The protein resides in the nucleus. In terms of biological role, transcription repressor capable of inhibiting the transactivation capability of TCF3/E47. May play a role in regulating antigen-dependent B-cell differentiation. This Homo sapiens (Human) protein is Musculin (MSC).